Reading from the N-terminus, the 537-residue chain is Leucine-rich repeat LGI family member 4 (537 aa).

Residues 1 to 19 form the signal peptide; it reads MGGAGILLFLLAWAGAGVA. 4 LRR repeats span residues 53–74, 77–98, 101–122, and 125–146; these read TLLS…SFLK, SLHL…AFIG, YLQY…ALRG, and SLTH…LFRG. Residues 158 to 208 form the LRRCT domain; the sequence is NPFQCDCRVLWLLQWMPTVNASVGTGACAGPPAVAQIQLNHLDPKKFKCRA. The N-linked (GlcNAc...) asparagine glycan is linked to asparagine 177. 7 EAR repeats span residues 210–252, 256–298, 302–349, 351–394, 396–439, 441–483, and 487–532; these read ELSW…VWDY, RFRP…SRSS, RLTP…CRDG, GFYP…HWVG, RFER…RWDG, MFRL…RFES, and ILEP…QHHE.

As to quaternary structure, can bind to ADAM11, ADAM22 and ADAM23. Brain. Expressed in the entire developing peripheral nerves. Strongly expressed in the trigeminal nerve and ganglion and particularly abundant in the boundary cap cells - a transient population of cells that contributes to the Schwann cell population of the dorsal root nerve.

Its subcellular location is the secreted. In terms of biological role, component of Schwann cell signaling pathway(s) that controls axon segregation and myelin formation. This is Leucine-rich repeat LGI family member 4 (Lgi4) from Mus musculus (Mouse).